Reading from the N-terminus, the 388-residue chain is Staphopain A (388 aa).

An N-terminal signal peptide occupies residues 1 to 25 (MKRNFPKLIALSLIFSLSITPIANA). A propeptide spanning residues 26–214 (ESNSNIKAKD…TSQFKSNNYT (189 aa)) is cleaved from the precursor. Catalysis depends on residues Cys238, His334, and Asn355.

It belongs to the peptidase C47 family. In the cytoplasm, prematurely activated/folded ScpA forms a stable non-covalent complex with ScpB. Cleavage leads to the activation of ScpA probably by an auto-catalytic manner.

The protein resides in the secreted. It carries out the reaction Broad endopeptidase action on proteins including elastin, but rather limited hydrolysis of small-molecule substrates. Assays are conveniently made with hemoglobin, casein or Z-Phe-Arg-NHMec as substrate.. With respect to regulation, prematurely activated/folded staphopain A is inhibited by staphostatin A (ScpB), which is probably required to protect staphylococcal cytoplasmic proteins from degradation by ScpA. Cysteine protease that plays an important role in the inhibition of host innate immune response. Cleaves host elastins found in connective tissues, pulmonary surfactant protein A in the lungs, and the chemokine receptor CXCR2 on leukocytes. Proteolytic cleavage of surfactant protein A impairs bacterial phagocytosis by neutrophils while CXCR2 degradation blocks neutrophil activation and chemotaxis. Additionally, promotes vascular leakage by activating the plasma kallikerin/kinin system, resulting in hypotension. The protein is Staphopain A (sspP) of Staphylococcus aureus (strain MRSA252).